The primary structure comprises 176 residues: MKQFLDFLPLVVFFIVYNLYDIYYASGALIVASALVLVYTWLRYRKVEKVALITFVLVAIFGSLTLYYHNAEFIKWKVTVIYSLFAAALLISQFVFGKPLIQRMLDKEIHLPARVWNNLNIAWALFFLACGAANIYIAFWLPQSVWVNFKVFGLTGLTLVFTLLSGIYIYRYNNTH.

5 helical membrane passes run Ile-22 to Leu-42, Val-50 to Asn-70, Ile-81 to Ile-101, Ile-121 to Leu-141, and Phe-149 to Ile-169.

It belongs to the YciB family.

The protein resides in the cell inner membrane. Functionally, plays a role in cell envelope biogenesis, maintenance of cell envelope integrity and membrane homeostasis. The sequence is that of Inner membrane-spanning protein YciB from Sodalis glossinidius (strain morsitans).